A 440-amino-acid polypeptide reads, in one-letter code: Chromosome partition protein MukF (440 aa).

Positions 208–236 (LSETSGTLRELQDTLEAAGDKLQANLLRI) are leucine-zipper.

The protein belongs to the MukF family. As to quaternary structure, interacts, and probably forms a ternary complex, with MukE and MukB via its C-terminal region. The complex formation is stimulated by calcium or magnesium. It is required for an interaction between MukE and MukB.

Its subcellular location is the cytoplasm. The protein localises to the nucleoid. Its function is as follows. Involved in chromosome condensation, segregation and cell cycle progression. May participate in facilitating chromosome segregation by condensation DNA from both sides of a centrally located replisome during cell division. Not required for mini-F plasmid partitioning. Probably acts via its interaction with MukB and MukE. Overexpression results in anucleate cells. It has a calcium binding activity. This chain is Chromosome partition protein MukF, found in Photorhabdus laumondii subsp. laumondii (strain DSM 15139 / CIP 105565 / TT01) (Photorhabdus luminescens subsp. laumondii).